The primary structure comprises 310 residues: L-lactate dehydrogenase (310 aa).

NAD(+) contacts are provided by residues Val-17, Asp-38, Lys-43, Tyr-69, and 83–84; that span reads GA. The substrate site is built by Gln-86 and Arg-92. Residues Ser-105, 122–124, and Ser-147 contribute to the NAD(+) site; that span reads ATN. 124–127 contacts substrate; it reads NPVD. 152–155 lines the substrate pocket; sequence DTAR. Beta-D-fructose 1,6-bisphosphate contacts are provided by Arg-157 and His-172. His-179 (proton acceptor) is an active-site residue. Position 218 is a phosphotyrosine (Tyr-218). Thr-227 is a substrate binding site.

It belongs to the LDH/MDH superfamily. LDH family. As to quaternary structure, homotetramer.

Its subcellular location is the cytoplasm. The enzyme catalyses (S)-lactate + NAD(+) = pyruvate + NADH + H(+). It participates in fermentation; pyruvate fermentation to lactate; (S)-lactate from pyruvate: step 1/1. Its activity is regulated as follows. Allosterically activated by fructose 1,6-bisphosphate (FBP). In terms of biological role, catalyzes the conversion of lactate to pyruvate. The chain is L-lactate dehydrogenase from Halalkalibacterium halodurans (strain ATCC BAA-125 / DSM 18197 / FERM 7344 / JCM 9153 / C-125) (Bacillus halodurans).